We begin with the raw amino-acid sequence, 465 residues long: Cysteine--tRNA ligase (465 aa).

C27 contributes to the Zn(2+) binding site. Positions 29–39 (PTVYNFFHIGN) match the 'HIGH' region motif. Zn(2+) is bound by residues C207, H232, and E236. A 'KMSKS' region motif is present at residues 264–268 (KMSKS). K267 is an ATP binding site.

The protein belongs to the class-I aminoacyl-tRNA synthetase family. In terms of assembly, monomer. Zn(2+) is required as a cofactor.

The protein resides in the cytoplasm. The catalysed reaction is tRNA(Cys) + L-cysteine + ATP = L-cysteinyl-tRNA(Cys) + AMP + diphosphate. This chain is Cysteine--tRNA ligase, found in Clostridium botulinum (strain Langeland / NCTC 10281 / Type F).